The primary structure comprises 339 residues: Phenylalanine--tRNA ligase alpha subunit (339 aa).

Glutamate 253 is a binding site for Mg(2+).

This sequence belongs to the class-II aminoacyl-tRNA synthetase family. Phe-tRNA synthetase alpha subunit type 1 subfamily. In terms of assembly, tetramer of two alpha and two beta subunits. Mg(2+) is required as a cofactor.

The protein localises to the cytoplasm. The catalysed reaction is tRNA(Phe) + L-phenylalanine + ATP = L-phenylalanyl-tRNA(Phe) + AMP + diphosphate + H(+). This Chromohalobacter salexigens (strain ATCC BAA-138 / DSM 3043 / CIP 106854 / NCIMB 13768 / 1H11) protein is Phenylalanine--tRNA ligase alpha subunit.